The following is a 201-amino-acid chain: Adenylyl-sulfate kinase (201 aa).

An ATP-binding site is contributed by 35 to 42; that stretch reads GLSGSGKS. The active-site Phosphoserine intermediate is S109.

This sequence belongs to the APS kinase family.

It catalyses the reaction adenosine 5'-phosphosulfate + ATP = 3'-phosphoadenylyl sulfate + ADP + H(+). It functions in the pathway sulfur metabolism; hydrogen sulfide biosynthesis; sulfite from sulfate: step 2/3. In terms of biological role, catalyzes the synthesis of activated sulfate. This is Adenylyl-sulfate kinase from Klebsiella pneumoniae (strain 342).